Consider the following 464-residue polypeptide: Methionine aminopeptidase 2-2 (464 aa).

Positions 1 to 106 (MGAKTYEGGD…PRVPLSQLFP (106 aa)) are disordered. Acidic residues predominate over residues 37–53 (EDGDGEFGSDDDDDGGD). Residues 70–86 (PKKKKRSKKKKNNKKKS) are compositionally biased toward basic residues. Position 216 (histidine 216) interacts with substrate. The a divalent metal cation site is built by aspartate 237, aspartate 248, and histidine 317. Position 325 (histidine 325) interacts with substrate. A divalent metal cation-binding residues include glutamate 350 and glutamate 445.

It belongs to the peptidase M24A family. Methionine aminopeptidase eukaryotic type 2 subfamily. Requires Co(2+) as cofactor. The cofactor is Zn(2+). Mn(2+) serves as cofactor. It depends on Fe(2+) as a cofactor.

The protein localises to the cytoplasm. It catalyses the reaction Release of N-terminal amino acids, preferentially methionine, from peptides and arylamides.. Cotranslationally removes the N-terminal methionine from nascent proteins. The N-terminal methionine is often cleaved when the second residue in the primary sequence is small and uncharged (Met-Ala-, Cys, Gly, Pro, Ser, Thr, or Val). The chain is Methionine aminopeptidase 2-2 from Talaromyces stipitatus (strain ATCC 10500 / CBS 375.48 / QM 6759 / NRRL 1006) (Penicillium stipitatum).